The primary structure comprises 292 residues: MEAFPWAPRSPRRGRAPPPMALVPSARYVSAPGPAHPQPFSSWNDYLGLATLITKAVDGEPRFGCARGGNGGGGSPPSSSSSSCCSPHTGAGPGALGPALGPPDYDEDDDDDSDEPGSRGRYLGSALELRALELCAGPAEAGLLEERFAELSPFAGRAAAVLLGCAPAAAAAATTTSEATPREERAPAWAAEPRLHAASGAAAARLLKPELQVCVFCRNNKEAMALYTTHILKGPDGRVLCPVLRRYTCPLCGASGDNAHTIKYCPLSKVPPPPARPPPRSARDGPPGKKLR.

Disordered regions lie at residues 1–41 (MEAF…QPFS) and 68–121 (GGNG…SRGR). The essential for its translational repressor activity stretch occupies residues 40-56 (FSSWNDYLGLATLITKA). Residues 76 to 87 (PPSSSSSSCCSP) show a composition bias toward low complexity. Positions 104 to 115 (DYDEDDDDDSDE) are enriched in acidic residues. The segment at 213–267 (VCVFCRNNKEAMALYTTHILKGPDGRVLCPVLRRYTCPLCGASGDNAHTIKYCPL) adopts a Nanos-type zinc-finger fold. Residues cysteine 214, cysteine 217, histidine 230, cysteine 241, cysteine 249, cysteine 252, histidine 260, and cysteine 265 each contribute to the Zn(2+) site. Short sequence motifs (C2HC) lie at residues 214–241 (CVFCRNNKEAMALYTTHILKGPDGRVLC) and 249–265 (CPLCGASGDNAHTIKYC). The disordered stretch occupies residues 268-292 (SKVPPPPARPPPRSARDGPPGKKLR). Positions 269–280 (KVPPPPARPPPR) are enriched in pro residues. Basic and acidic residues predominate over residues 281-292 (SARDGPPGKKLR).

Belongs to the nanos family. As to quaternary structure, interacts with PUM2, SNAPIN and CTNNB1. Interacts (via N-terminal region) with CTNND1. Interacts with DDX20 (via N-terminal region). Testis and ovary (at protein level). Predominantly expressed in testis. Specifically expressed during germline development. In adult tissues, it is mainly expressed in spermatogonia, the stem cells of the germline. Also expressed during meiosis in spermatocytes. Not present in late, post-meiotic stage germ cells. Expressed in fetal ovaries, while it is weakly or not expressed in mature postmeiotic oocytes, suggesting that it may be expressed in premeiotic female germ cells. Expressed at high levels only in the E-cadherin deficient cell lines. Highly expressed in lung carcinomas and mostly detected in invasive tumor cells and its expression correlates with tumor aggressiveness.

The protein localises to the cytoplasm. The protein resides in the perinuclear region. Functionally, may act as a translational repressor which regulates translation of specific mRNAs by forming a complex with PUM2 that associates with the 3'-UTR of mRNA targets. Capable of interfering with the proadhesive and anti-invasive functions of E-cadherin. Up-regulates the production of MMP14 to promote tumor cell invasion. The chain is Nanos homolog 1 (NANOS1) from Homo sapiens (Human).